A 152-amino-acid chain; its full sequence is UPF0178 protein swp_1285 (152 aa).

It belongs to the UPF0178 family.

In Shewanella piezotolerans (strain WP3 / JCM 13877), this protein is UPF0178 protein swp_1285.